The following is a 920-amino-acid chain: Chitin synthase C (920 aa).

Disordered regions lie at residues M1–Q41 and I140–P173. Residues Y154–Q163 show a composition bias toward acidic residues. Helical transmembrane passes span S466–L486, R564–W584, L608–L628, V640–A660, and M675–V695. N-linked (GlcNAc...) asparagine glycosylation occurs at N715. The next 4 helical transmembrane spans lie at F718–I738, F749–C769, A847–A867, and V892–L912.

It belongs to the chitin synthase family. Class I subfamily.

The protein resides in the cell membrane. The catalysed reaction is [(1-&gt;4)-N-acetyl-beta-D-glucosaminyl](n) + UDP-N-acetyl-alpha-D-glucosamine = [(1-&gt;4)-N-acetyl-beta-D-glucosaminyl](n+1) + UDP + H(+). Functionally, polymerizes chitin, a structural polymer of the cell wall and septum, by transferring the sugar moiety of UDP-GlcNAc to the non-reducing end of the growing chitin polymer. Involved in hyphal growth. This Aspergillus oryzae (strain ATCC 42149 / RIB 40) (Yellow koji mold) protein is Chitin synthase C.